Consider the following 378-residue polypeptide: MKYDKDRVKESLTIEDIHKILKDLGSENNLWDQQGNPIYRTVCHNASGGSYKLYYYHEAKQFHCYTECGDNFDVFELVIRAKSQKGINISFNQAIEYVAKIAGRTFGFGNRETYINNDLIDDWEWMGKFKKKKKIHIELPSFNETVLDVFVPYPHQLWLGEGISHKTLKEFEIGYYFRPHTEGITIPHRDLNNRLIGIRRRSMIKEEVDAGYKYMPLKVGNILYNHQTMMNLYGLHKTKNSIERFKKVLIFESEKSVLKCQDFYGESNFTCAVCSSNISNFHRDILLSLGVEEVFIALDKYRPPKEHETEEKYQEKLVEYQKKILKLAAKFTPYVRVYVLWDYEGLLDYKDSPADKGKETLEELMRRKIEIGTDEGGI.

The sequence is that of SPbeta prophage-derived uncharacterized protein YorJ (yorJ) from Bacillus subtilis (strain 168).